The sequence spans 322 residues: MSSDQAKDRAKAAIVGSLVADAATQPVHWVYDHNRFYENFRNKSEPEFNSEWLNPYYRYDNGTFSIYGEQNYVLLKHLVENKGFNLKKYMDAYYRHFGPGTNYDQPQSRDRLPKQGPWRNEHITRALNKIQSGDQRSGTDVAECDSYAMITPLVAMYAGSGQLDSYVEQVVRVTLNNDRSVRTAQFFAKLLEHYILHGRDPEAFRKVLNNFPDDQYKFEWQKAYYDRDLSNNDAVRKYGSGCGLPGNFQGALHCVNRNEDYVSSVRTTIRSGGCNCPRACGVGAWVAAQYGSQCIPSNWISRTSRGNEIVQYAEQLSKMMKK.

The protein belongs to the ADP-ribosylglycohydrolase family. J1 crystallin subfamily. Expressed in the rhopalia. Present in both the large and small eyes.

This Tripedalia cystophora (Jellyfish) protein is Crystallin J1A.